The primary structure comprises 148 residues: Small ribosomal subunit protein eS6 (148 aa).

Belongs to the eukaryotic ribosomal protein eS6 family.

In Pyrobaculum aerophilum (strain ATCC 51768 / DSM 7523 / JCM 9630 / CIP 104966 / NBRC 100827 / IM2), this protein is Small ribosomal subunit protein eS6.